A 383-amino-acid chain; its full sequence is uncharacterized protein (383 aa).

Transmembrane regions (helical) follow at residues 49–69 (VDLL…GCVA) and 347–367 (LLGG…PVAG).

This sequence to M.tuberculosis Rv0874c.

The protein localises to the cell membrane. This is an uncharacterized protein from Mycobacterium tuberculosis (strain CDC 1551 / Oshkosh).